The sequence spans 380 residues: Lipid-A-disaccharide synthase (380 aa).

Belongs to the LpxB family.

The enzyme catalyses a lipid X + a UDP-2-N,3-O-bis[(3R)-3-hydroxyacyl]-alpha-D-glucosamine = a lipid A disaccharide + UDP + H(+). Its pathway is bacterial outer membrane biogenesis; LPS lipid A biosynthesis. Its function is as follows. Condensation of UDP-2,3-diacylglucosamine and 2,3-diacylglucosamine-1-phosphate to form lipid A disaccharide, a precursor of lipid A, a phosphorylated glycolipid that anchors the lipopolysaccharide to the outer membrane of the cell. In Rickettsia typhi (strain ATCC VR-144 / Wilmington), this protein is Lipid-A-disaccharide synthase.